A 476-amino-acid chain; its full sequence is Bifunctional protein HldE (476 aa).

Positions 1–318 (MKVTLPDFRR…ENAIRGRAET (318 aa)) are ribokinase. 195–198 (NLSE) is an ATP binding site. Asp264 is a catalytic residue. Residues 344-476 (MTNGIFDILH…IIQSIKNGRG (133 aa)) are cytidylyltransferase.

This sequence in the N-terminal section; belongs to the carbohydrate kinase PfkB family. It in the C-terminal section; belongs to the cytidylyltransferase family. In terms of assembly, homodimer.

The catalysed reaction is D-glycero-beta-D-manno-heptose 7-phosphate + ATP = D-glycero-beta-D-manno-heptose 1,7-bisphosphate + ADP + H(+). It carries out the reaction D-glycero-beta-D-manno-heptose 1-phosphate + ATP + H(+) = ADP-D-glycero-beta-D-manno-heptose + diphosphate. It functions in the pathway nucleotide-sugar biosynthesis; ADP-L-glycero-beta-D-manno-heptose biosynthesis; ADP-L-glycero-beta-D-manno-heptose from D-glycero-beta-D-manno-heptose 7-phosphate: step 1/4. Its pathway is nucleotide-sugar biosynthesis; ADP-L-glycero-beta-D-manno-heptose biosynthesis; ADP-L-glycero-beta-D-manno-heptose from D-glycero-beta-D-manno-heptose 7-phosphate: step 3/4. Catalyzes the phosphorylation of D-glycero-D-manno-heptose 7-phosphate at the C-1 position to selectively form D-glycero-beta-D-manno-heptose-1,7-bisphosphate. Its function is as follows. Catalyzes the ADP transfer from ATP to D-glycero-beta-D-manno-heptose 1-phosphate, yielding ADP-D-glycero-beta-D-manno-heptose. The sequence is that of Bifunctional protein HldE from Yersinia pestis bv. Antiqua (strain Antiqua).